The following is a 413-amino-acid chain: Metacaspase-1A (413 aa).

The interval 1 to 104 (MQNHHHQQSS…PTDPVAFGHG (104 aa)) is disordered. Over residues 36–47 (SPQPGYGAPPPH) the composition is skewed to pro residues. The span at 49–58 (GYGQPPSGYG) shows a compositional bias: low complexity. The span at 75 to 85 (GMNQYQNTYSH) shows a compositional bias: polar residues. Residues histidine 204 and cysteine 260 contribute to the active site.

The protein belongs to the peptidase C14B family.

Its function is as follows. Involved in cell death (apoptosis). Required for the apoptotic-like loss of membrane phospholipid asymmetry at stationary phase and facilitates growth under conditions of endoplasmic reticulum stress. This is Metacaspase-1A (casA) from Aspergillus fumigatus (strain CBS 144.89 / FGSC A1163 / CEA10) (Neosartorya fumigata).